The following is a 390-amino-acid chain: Formate-dependent phosphoribosylglycinamide formyltransferase (390 aa).

N(1)-(5-phospho-beta-D-ribosyl)glycinamide-binding positions include 18-19 (EL) and Glu78. ATP is bound by residues Arg110, Lys151, 156 to 161 (SSGKGQ), 191 to 194 (EEFL), and Glu199. The ATP-grasp domain maps to 115–305 (DLASKELNIK…EFELHLRAFL (191 aa)). Mg(2+) contacts are provided by Glu264 and Glu276. N(1)-(5-phospho-beta-D-ribosyl)glycinamide-binding positions include Asp283, Lys353, and 360–361 (RR).

Belongs to the PurK/PurT family. In terms of assembly, homodimer.

The catalysed reaction is N(1)-(5-phospho-beta-D-ribosyl)glycinamide + formate + ATP = N(2)-formyl-N(1)-(5-phospho-beta-D-ribosyl)glycinamide + ADP + phosphate + H(+). It functions in the pathway purine metabolism; IMP biosynthesis via de novo pathway; N(2)-formyl-N(1)-(5-phospho-D-ribosyl)glycinamide from N(1)-(5-phospho-D-ribosyl)glycinamide (formate route): step 1/1. Functionally, involved in the de novo purine biosynthesis. Catalyzes the transfer of formate to 5-phospho-ribosyl-glycinamide (GAR), producing 5-phospho-ribosyl-N-formylglycinamide (FGAR). Formate is provided by PurU via hydrolysis of 10-formyl-tetrahydrofolate. This is Formate-dependent phosphoribosylglycinamide formyltransferase from Prochlorococcus marinus subsp. pastoris (strain CCMP1986 / NIES-2087 / MED4).